The following is a 152-amino-acid chain: MGLSTLEQKLTEMITAPVEALGYELVGIEFIRGRTSTLRIYIDSEDGINVDDCADVSHQVSAVLDVEDPISVAYNLEVSSPGLDRPMFTADHYARFQGEEVALVLRMAVQNRRKWQGIIKAVDGEMITVTVEGKDEVFALSNIQKANLVPHF.

The protein belongs to the RimP family.

Its subcellular location is the cytoplasm. Its function is as follows. Required for maturation of 30S ribosomal subunits. In Salmonella arizonae (strain ATCC BAA-731 / CDC346-86 / RSK2980), this protein is Ribosome maturation factor RimP.